Consider the following 600-residue polypeptide: Polypeptide N-acetylgalactosaminyltransferase (600 aa).

The Cytoplasmic segment spans residues 1–7 (MVRRKLR). Residues 8–28 (LLVILAGIWLVGIVVYLFKGD) traverse the membrane as a helical; Signal-anchor for type II membrane protein segment. The Lumenal segment spans residues 29–600 (DQSEFEKRVI…KWTFSLSKNR (572 aa)). 5 disulfides stabilise this stretch: Cys-154/Cys-382, Cys-373/Cys-451, Cys-484/Cys-501, Cys-524/Cys-541, and Cys-567/Cys-583. Residues 163-268 (LPDTSVIITF…EKWLEPLLDR (106 aa)) are catalytic subdomain A. The substrate site is built by Thr-171, Asp-204, and Arg-229. Asp-252 lines the Mn(2+) pocket. Residue Ser-253 participates in substrate binding. Position 254 (His-254) interacts with Mn(2+). Residues 328–390 (PIRTPMIAGG…PCSRVGHVFR (63 aa)) are catalytic subdomain B. Trp-359 is a substrate binding site. Position 387 (His-387) interacts with Mn(2+). Arg-390, His-393, and Tyr-395 together coordinate substrate. Residues 466 to 595 (KIPSVQDIAF…SSYTQKWTFS (130 aa)) form the Ricin B-type lectin domain.

Belongs to the glycosyltransferase 2 family. GalNAc-T subfamily. It depends on Mn(2+) as a cofactor. O-glycosylated.

Its subcellular location is the golgi apparatus membrane. The catalysed reaction is L-seryl-[protein] + UDP-N-acetyl-alpha-D-galactosamine = a 3-O-[N-acetyl-alpha-D-galactosaminyl]-L-seryl-[protein] + UDP + H(+). It carries out the reaction L-threonyl-[protein] + UDP-N-acetyl-alpha-D-galactosamine = a 3-O-[N-acetyl-alpha-D-galactosaminyl]-L-threonyl-[protein] + UDP + H(+). Its pathway is protein modification; protein glycosylation. No change in activity by addition of up to 10% methanol or glycerol, or 5% acetonitrile. 40% reduction in activity by 10% acetonitrile or by lyophilization. Activity requires divalent cations, the best being Mn(2+) (10-20 mM), followed by Co(2+), Mg(2+) and Ca(2+). Loss of activity with Cu(2+) or in the presence of EDTA. Inhibited by UDP, but not by UMP, UTP, ADP or GDP nucleotides. No inhibition by galactose, N-acetylglucosamine or N-acetylgalactosamine sugars. In terms of biological role, catalyzes the initial reaction in O-linked oligosaccharide biosynthesis, the transfer of an N-acetyl-D-galactosamine residue to a serine or threonine residue on the protein receptor. Has a broad substrate specificity. Acceptor peptides include Muc2, Muc5Ac, Muc1a and Muc1a', with Muc2 as the best acceptor. Acts on non-glycosylated and mono- or multi-glycosylated peptide substrates. Transfers preferably to threonine rather than serine residue. Thr-15 is the most preferred site of glycosylation in Muc2 peptide PTTTPITTTTTVTPTPTPTGTQTK having proline residues at position -1, and at positions +1 and +3, where the number represents the distance from the C-terminal and N-terminal hydroxyl amino acid, respectively. Transfer of the N-acetyl-D-galactosamine (GalNAc) is optimal with proline residues at positions -3, -1, +1 and +3, but other amino acids are tolerated, although some, such as phenylalanine, isoleucine or leucine at -1, or lysine at +3 prevent the transfer completely. Second GalNAc is transferred to Muc2 Thr-2 or Thr-13, both of which have two proline residues nearby. Up to nine sites can be glycosylated within Muc2, but eight are used simultaneously since Thr-19 and Thr-21 are not detected to be glycosylated at the same time. Glycosylation is not detected of a potential site, which is next to an already glycosylated site, but only one amino acid is needed in between two glycosylation sites. Ser-5 is the preferred glycosylation site in Muc5Ac peptide GTTPSPVPTTSTTSAP into which up to four GalNAcs can be attached. Only the threonine residues are detected as pontential glycosylation sites in Muc1a APPAHGVTSAPDTRPAPGC and Muc1a' AHGVTSAPDTR peptides. Transferase activity is restricted to UDP-GalNAc as a donor, and none of the nucleotide sugars UDP-Gal, UDP-GlcNAc, GDP-fucose, UDP-xylose, UDP-glucuronic acid or CMP-neuraminic acid are utilized as donors. The protein is Polypeptide N-acetylgalactosaminyltransferase of Biomphalaria glabrata (Bloodfluke planorb).